The primary structure comprises 621 residues: Chaperone protein DnaK (621 aa).

Thr-175 carries the phosphothreonine; by autocatalysis modification. The span at 499–516 (EAHEADDKKRKEDAETRN) shows a compositional bias: basic and acidic residues. Disordered stretches follow at residues 499–520 (EAHEADDKKRKEDAETRNNAEN) and 583–621 (AQQGAEGAAGAADSGSANNGGDDDVVDAEVVDDDDKDNK). A compositionally biased stretch (low complexity) spans 583–602 (AQQGAEGAAGAADSGSANNG). Over residues 603 to 621 (GDDDVVDAEVVDDDDKDNK) the composition is skewed to acidic residues.

This sequence belongs to the heat shock protein 70 family.

Its function is as follows. Acts as a chaperone. This Bifidobacterium animalis subsp. lactis (strain AD011) protein is Chaperone protein DnaK.